We begin with the raw amino-acid sequence, 212 residues long: Methylthioribulose-1-phosphate dehydratase (212 aa).

Zn(2+) is bound by residues histidine 97 and histidine 99.

It belongs to the aldolase class II family. MtnB subfamily. Homotetramer. It depends on Zn(2+) as a cofactor.

It carries out the reaction 5-(methylsulfanyl)-D-ribulose 1-phosphate = 5-methylsulfanyl-2,3-dioxopentyl phosphate + H2O. It functions in the pathway amino-acid biosynthesis; L-methionine biosynthesis via salvage pathway; L-methionine from S-methyl-5-thio-alpha-D-ribose 1-phosphate: step 2/6. Catalyzes the dehydration of methylthioribulose-1-phosphate (MTRu-1-P) into 2,3-diketo-5-methylthiopentyl-1-phosphate (DK-MTP-1-P). The polypeptide is Methylthioribulose-1-phosphate dehydratase (Bacillus cereus (strain AH187)).